The primary structure comprises 116 residues: Vitelline membrane protein Vm32E (116 aa).

Residues 1–17 (MQIVALTLVAFVAIAGA) form the signal peptide. In terms of domain architecture, VM spans 36-73 (GYPAPPCPTNYLFSCQPNLAPAPCAQEAPAYGSAGAYT).

The protein belongs to the vitelline membrane family. Post-translationally, sulfated by pip; may be involved in embryo dorsal-ventral axis determination. Sulfation by pip may occur on covalently bound glycosaminoglycans. As to expression, expressed in stage 10 egg-chambers, localized in the outer eggshell (chorion membrane).

Its subcellular location is the secreted. Major early eggshell protein. This is Vitelline membrane protein Vm32E from Drosophila melanogaster (Fruit fly).